The following is a 151-amino-acid chain: Ribosome maturation factor RimP (151 aa).

Belongs to the RimP family.

It is found in the cytoplasm. Functionally, required for maturation of 30S ribosomal subunits. The protein is Ribosome maturation factor RimP of Halorhodospira halophila (strain DSM 244 / SL1) (Ectothiorhodospira halophila (strain DSM 244 / SL1)).